A 362-amino-acid chain; its full sequence is MNSRVFNFGAGPAMLPEEILKEAQEEFLNWRNTGMSILEIGHRTPEIISLLSTAEQSLRELLNIPKNYHVLFLGGAARTQFAMIPMNLLRPGDDAAYFITGIWSKMAYHEANLLKKAYYLSSEEKEGFVSIPDYQKWELKSNTAYVYYTPNETINGVRFPYVPKTGGVPLVADMTSCLLSEPININQYGLIFAGAQKNIANAGLTVVIIHEELLKNQPEPVIPTMLNYKNHAEHRSLYATPPVFNCYLASKMFEWIKTQGGIEGLFQRNCLKAAKLYQYLDSTDFYLTPVFKEARSIMNICFSLCYPDLEHKFLDMANERGLKALKGHRFTGGLRASLYNAMPMAGVDALIEFMSEFAKENG.

L-glutamate is bound at residue R43. Pyridoxal 5'-phosphate contacts are provided by residues 77–78, W103, T153, D173, and Q196; that span reads AR. K197 bears the N6-(pyridoxal phosphate)lysine mark.

It belongs to the class-V pyridoxal-phosphate-dependent aminotransferase family. SerC subfamily. As to quaternary structure, homodimer. It depends on pyridoxal 5'-phosphate as a cofactor.

Its subcellular location is the cytoplasm. The enzyme catalyses O-phospho-L-serine + 2-oxoglutarate = 3-phosphooxypyruvate + L-glutamate. It catalyses the reaction 4-(phosphooxy)-L-threonine + 2-oxoglutarate = (R)-3-hydroxy-2-oxo-4-phosphooxybutanoate + L-glutamate. Its pathway is amino-acid biosynthesis; L-serine biosynthesis; L-serine from 3-phospho-D-glycerate: step 2/3. It participates in cofactor biosynthesis; pyridoxine 5'-phosphate biosynthesis; pyridoxine 5'-phosphate from D-erythrose 4-phosphate: step 3/5. Functionally, catalyzes the reversible conversion of 3-phosphohydroxypyruvate to phosphoserine and of 3-hydroxy-2-oxo-4-phosphonooxybutanoate to phosphohydroxythreonine. The chain is Phosphoserine aminotransferase from Legionella pneumophila (strain Lens).